Consider the following 332-residue polypeptide: uncharacterized protein (332 aa).

A signal peptide spans 1–26 (MSSLGKLLKLTLLGILLSFSCKFVFG).

It localises to the endoplasmic reticulum. This is an uncharacterized protein from Schizosaccharomyces pombe (strain 972 / ATCC 24843) (Fission yeast).